A 962-amino-acid polypeptide reads, in one-letter code: Vacuolar membrane protease (962 aa).

Topologically, residues 1-15 are cytoplasmic; that stretch reads MVSSRRGFNPIAFTP. A helical transmembrane segment spans residues 16 to 36; it reads WPVTILSSLVYLALIIPIIVV. Topologically, residues 37-390 are vacuolar; sequence HHLVPPAPKE…FQLNTLFGHS (354 aa). N110 and N113 each carry an N-linked (GlcNAc...) asparagine glycan. Residues H169 and D181 each contribute to the Zn(2+) site. E215 functions as the Proton acceptor in the catalytic mechanism. Zn(2+)-binding residues include E216, E241, and H314. A helical membrane pass occupies residues 391–411; the sequence is VALLVVAPLLLIITSVALFAV. The Cytoplasmic portion of the chain corresponds to 412 to 440; sequence DKMYMFSMYTYISESGGQVSLYGLRGMFR. The helical transmembrane segment at 441-461 threads the bilayer; sequence FPLILGISTALTIALAFLIMK. Topologically, residues 462–472 are vacuolar; the sequence is VNPFIIYSSPY. The chain crosses the membrane as a helical span at residues 473–493; sequence AVWSMMLSTCMFFAWFISCVA. Over 494–503 the chain is Cytoplasmic; sequence DFARPSALHR. The chain crosses the membrane as a helical span at residues 504–524; that stretch reads AYSFSWMFGIMWVFLVIATVY. At 525-534 the chain is on the vacuolar side; sequence QKQHGIASSY. Residues 535-555 traverse the membrane as a helical segment; sequence FIVFYFAGVAVATWISYLELF. The Cytoplasmic portion of the chain corresponds to 556–667; the sequence is GLPKTQDYAR…WSIYLMSSAW (112 aa). The disordered stretch occupies residues 568 to 617; the sequence is GRLSDRTPSSDSHFLAPSADELPSSSSAAGRDFNPEDVEDEEPTESTSLL. A compositionally biased stretch (acidic residues) spans 602-611; sequence PEDVEDEEPT. The chain crosses the membrane as a helical span at residues 668–688; that stretch reads ILQFLLVAPIVIILLGQLGLF. Over 689 to 704 the chain is Vacuolar; it reads LTSATYQIGADGGSQL. The helical transmembrane segment at 705 to 725 threads the bilayer; the sequence is VIYIGIAVLSVLILLPLFPFI. Residues 726 to 731 are Cytoplasmic-facing; that stretch reads HRFTYH. A helical transmembrane segment spans residues 732–752; sequence IPTFLLFILIGTLVYNLTAFP. The Vacuolar portion of the chain corresponds to 753-962; that stretch reads FSHSNRLKLA…LVEGSYSFKL (210 aa). An N-linked (GlcNAc...) asparagine glycan is attached at N834.

This sequence belongs to the peptidase M28 family. It depends on Zn(2+) as a cofactor.

The protein localises to the vacuole membrane. Its function is as follows. May be involved in vacuolar sorting and osmoregulation. This is Vacuolar membrane protease from Arthroderma benhamiae (strain ATCC MYA-4681 / CBS 112371) (Trichophyton mentagrophytes).